A 220-amino-acid polypeptide reads, in one-letter code: Ribose-5-phosphate isomerase A (220 aa).

Substrate is bound by residues 25–28 (TGST), 80–83 (DGAD), and 93–96 (KGGG). Glu102 functions as the Proton acceptor in the catalytic mechanism. Residue Lys120 participates in substrate binding.

Belongs to the ribose 5-phosphate isomerase family. In terms of assembly, homodimer.

It catalyses the reaction aldehydo-D-ribose 5-phosphate = D-ribulose 5-phosphate. It functions in the pathway carbohydrate degradation; pentose phosphate pathway; D-ribose 5-phosphate from D-ribulose 5-phosphate (non-oxidative stage): step 1/1. Functionally, catalyzes the reversible conversion of ribose-5-phosphate to ribulose 5-phosphate. The sequence is that of Ribose-5-phosphate isomerase A from Bacillus cereus (strain ATCC 10987 / NRS 248).